The primary structure comprises 304 residues: Transcription factor BEE 2 (304 aa).

Residues 74–132 are disordered; the sequence is FHMEPVKNNGHSRAITLQNKRKPEGKTEKREKKKIKAEDETEPSMKGKSNMSNTETSSE. The segment covering 82–91 has biased composition (polar residues); sequence NGHSRAITLQ. Residues 94–103 show a composition bias toward basic and acidic residues; it reads RKPEGKTEKR. Over residues 120–132 the composition is skewed to polar residues; that stretch reads GKSNMSNTETSSE. In terms of domain architecture, bHLH spans 147–197; that stretch reads EATDRHSLAERARREKISKKMKCLQDIVPGCNKVTGKAGMLDEIINYVQSL.

As to quaternary structure, homodimer. Expressed in stems and flowers.

The protein resides in the nucleus. Its function is as follows. Positive regulator of brassinosteroid signaling. The chain is Transcription factor BEE 2 (BEE2) from Arabidopsis thaliana (Mouse-ear cress).